Here is a 348-residue protein sequence, read N- to C-terminus: tRNA N6-adenosine threonylcarbamoyltransferase (348 aa).

Residues His111 and His115 each contribute to the Fe cation site. Residues 134 to 138, Asp167, Gly180, Asp184, and Asn279 each bind substrate; that span reads LVSGG. Asp307 serves as a coordination point for Fe cation.

This sequence belongs to the KAE1 / TsaD family. It depends on Fe(2+) as a cofactor.

It localises to the cytoplasm. The enzyme catalyses L-threonylcarbamoyladenylate + adenosine(37) in tRNA = N(6)-L-threonylcarbamoyladenosine(37) in tRNA + AMP + H(+). Functionally, required for the formation of a threonylcarbamoyl group on adenosine at position 37 (t(6)A37) in tRNAs that read codons beginning with adenine. Is involved in the transfer of the threonylcarbamoyl moiety of threonylcarbamoyl-AMP (TC-AMP) to the N6 group of A37, together with TsaE and TsaB. TsaD likely plays a direct catalytic role in this reaction. This Synechocystis sp. (strain ATCC 27184 / PCC 6803 / Kazusa) protein is tRNA N6-adenosine threonylcarbamoyltransferase.